The chain runs to 31 residues: Photosystem II reaction center protein T (31 aa).

The chain crosses the membrane as a helical span at residues 3–23 (ALVYTFLLVGTLGIIFFSIFF).

The protein belongs to the PsbT family. As to quaternary structure, PSII is composed of 1 copy each of membrane proteins PsbA, PsbB, PsbC, PsbD, PsbE, PsbF, PsbH, PsbI, PsbJ, PsbK, PsbL, PsbM, PsbT, PsbY, PsbZ, Psb30/Ycf12, at least 3 peripheral proteins of the oxygen-evolving complex and a large number of cofactors. It forms dimeric complexes.

Its subcellular location is the plastid. The protein localises to the chloroplast thylakoid membrane. Functionally, found at the monomer-monomer interface of the photosystem II (PS II) dimer, plays a role in assembly and dimerization of PSII. PSII is a light-driven water plastoquinone oxidoreductase, using light energy to abstract electrons from H(2)O, generating a proton gradient subsequently used for ATP formation. In Chlamydomonas reinhardtii (Chlamydomonas smithii), this protein is Photosystem II reaction center protein T.